A 406-amino-acid polypeptide reads, in one-letter code: Tryptophan synthase beta chain (406 aa).

An N6-(pyridoxal phosphate)lysine modification is found at lysine 99.

It belongs to the TrpB family. Tetramer of two alpha and two beta chains. Pyridoxal 5'-phosphate serves as cofactor.

The catalysed reaction is (1S,2R)-1-C-(indol-3-yl)glycerol 3-phosphate + L-serine = D-glyceraldehyde 3-phosphate + L-tryptophan + H2O. The protein operates within amino-acid biosynthesis; L-tryptophan biosynthesis; L-tryptophan from chorismate: step 5/5. Functionally, the beta subunit is responsible for the synthesis of L-tryptophan from indole and L-serine. This Allorhizobium ampelinum (strain ATCC BAA-846 / DSM 112012 / S4) (Agrobacterium vitis (strain S4)) protein is Tryptophan synthase beta chain.